Consider the following 296-residue polypeptide: Giardin subunit alpha-3 (296 aa).

Annexin repeat units lie at residues 3-72 (DTVT…SNCW), 74-146 (ELPV…TWIK), 153-222 (NNIN…TAHY), and 226-295 (GMNN…VLWR).

Belongs to the annexin family. Giardin subunit alpha subfamily.

The protein localises to the cytoplasm. Its subcellular location is the cytoskeleton. In terms of biological role, giardins are involved in parasite attachment to the intestinal mucosa and in the cytoskeletal disassembly and reassembly that marks the transition from infectious trophozoite to transmissible cyst. They may interact with other cytoskeletal proteins such as microtubules in the microribbons or crossbridges, to maintain the integrity of the ventral disk. This Giardia intestinalis (Giardia lamblia) protein is Giardin subunit alpha-3.